A 217-amino-acid chain; its full sequence is Deoxyribose-phosphate aldolase (217 aa).

Residue Asp-89 is the Proton donor/acceptor of the active site. Lys-151 (schiff-base intermediate with acetaldehyde) is an active-site residue. The active-site Proton donor/acceptor is the Lys-180.

Belongs to the DeoC/FbaB aldolase family. DeoC type 1 subfamily.

The protein localises to the cytoplasm. The enzyme catalyses 2-deoxy-D-ribose 5-phosphate = D-glyceraldehyde 3-phosphate + acetaldehyde. Its pathway is carbohydrate degradation; 2-deoxy-D-ribose 1-phosphate degradation; D-glyceraldehyde 3-phosphate and acetaldehyde from 2-deoxy-alpha-D-ribose 1-phosphate: step 2/2. Its function is as follows. Catalyzes a reversible aldol reaction between acetaldehyde and D-glyceraldehyde 3-phosphate to generate 2-deoxy-D-ribose 5-phosphate. The chain is Deoxyribose-phosphate aldolase from Mycoplasma mobile (strain ATCC 43663 / 163K / NCTC 11711) (Mesomycoplasma mobile).